We begin with the raw amino-acid sequence, 59 residues long: Small integral membrane protein 30 (59 aa).

The first 24 residues, 1–24 (MNSVSTQLILVLASLLLILPVVEA), serve as a signal peptide directing secretion. At 25 to 29 (VEAGD) the chain is on the extracellular side. A helical transmembrane segment spans residues 30–50 (AIALLLGVVLSITGICACLGI). Over 51-59 (YARKRNGQM) the chain is Cytoplasmic.

As to quaternary structure, interacts (via transmembrane domain) with antiviral protein MAVS (via transmembrane domain); the interaction disrupts MAVS interaction with RIGI and inhibits MAVS aggregation, resulting in the repression of type I interferon signaling and innate immune responses.

It is found in the endoplasmic reticulum membrane. Its subcellular location is the mitochondrion membrane. Its function is as follows. Negatively regulates antiviral innate immune responses. Disrupts the interaction of antiviral protein MAVS with innate immune receptor RIGI and inhibits MAVS aggregation, resulting in the repression of type I interferon signaling and innate immune responses. The chain is Small integral membrane protein 30 from Mus musculus (Mouse).